The sequence spans 236 residues: Probable pseudouridine-5'-phosphatase YKL033W-A (236 aa).

It belongs to the HAD-like hydrolase superfamily.

The catalysed reaction is XMP + H2O = xanthosine + phosphate. It catalyses the reaction psi-UMP + H2O = pseudouridine + phosphate. Nucleotidase with XMP as the best in vitro substrate. Low catalytic efficiencies of YKL033W-A observed with XMP and other substrates suggest that these could be secondary activities for this protein, and its primary substrate is not yet identified. May possess pseudouridine 5'-phosphatase activity and together with dTTP/UTP pyrophosphatase YOR111W might constitute a pathway for the detoxification of pseudouridine 5'-triphosphate (Psi-UTP) and -monophosphate (Psi-UMP). This chain is Probable pseudouridine-5'-phosphatase YKL033W-A, found in Saccharomyces cerevisiae (strain ATCC 204508 / S288c) (Baker's yeast).